A 277-amino-acid polypeptide reads, in one-letter code: MNNLLLSINWNPNPELFNLFGISIRYYGLLWAIGIFFAYIVVHYQYRDKKIDEKKFEPLFFYCFFGILIGARLGHCLFYDPGYYLNHFWEMILPVKFLPGGGWKFTGYEGLASHGGTLGLIISLWLYCRKTKMNYMDVVDMIAVATPITACFIRLANLMNSEIIGKVTDVSWAFVFERVDMQPRHPAQLYEAIAYFILFLVMMFLYKNYSKKLHRGFFFGLCLTAIFTFRFFVEFLKENQVDFENSMALNMGQWLSIPFVIIGIYFMFFYGKKKSVK.

4 consecutive transmembrane segments (helical) span residues 22-42 (ISIRYYGLLWAIGIFFAYIVV), 59-79 (LFFYCFFGILIGARLGHCLFY), 107-127 (GYEGLASHGGTLGLIISLWLY), and 133-153 (MNYMDVVDMIAVATPITACFI). Arg-154 lines the a 1,2-diacyl-sn-glycero-3-phospho-(1'-sn-glycerol) pocket. A run of 3 helical transmembrane segments spans residues 186–206 (PAQLYEAIAYFILFLVMMFLY), 216–236 (GFFFGLCLTAIFTFRFFVEFL), and 251–271 (MGQWLSIPFVIIGIYFMFFYG).

It belongs to the Lgt family.

It is found in the cell inner membrane. The catalysed reaction is L-cysteinyl-[prolipoprotein] + a 1,2-diacyl-sn-glycero-3-phospho-(1'-sn-glycerol) = an S-1,2-diacyl-sn-glyceryl-L-cysteinyl-[prolipoprotein] + sn-glycerol 1-phosphate + H(+). Its pathway is protein modification; lipoprotein biosynthesis (diacylglyceryl transfer). In terms of biological role, catalyzes the transfer of the diacylglyceryl group from phosphatidylglycerol to the sulfhydryl group of the N-terminal cysteine of a prolipoprotein, the first step in the formation of mature lipoproteins. This Bacteroides fragilis (strain ATCC 25285 / DSM 2151 / CCUG 4856 / JCM 11019 / LMG 10263 / NCTC 9343 / Onslow / VPI 2553 / EN-2) protein is Phosphatidylglycerol--prolipoprotein diacylglyceryl transferase.